The primary structure comprises 1030 residues: Halotolerance protein 9 (1030 aa).

Residues 136–166 (CDHCRKRKIRCDEVDQQTKKCSNCIKFQLPC) constitute a DNA-binding region (zn(2)-C6 fungal-type). A disordered region spans residues 185-208 (HHATPGESLQTSNSISNPVASSSV). Residues 196 to 208 (SNSISNPVASSSV) are compositionally biased toward low complexity. Ser221 and Ser937 each carry phosphoserine.

The protein localises to the cytoplasm. It localises to the nucleus. Its function is as follows. Putative transcription factor involved in halotolerance. The protein is Halotolerance protein 9 (HAL9) of Saccharomyces cerevisiae (strain ATCC 204508 / S288c) (Baker's yeast).